The following is an 875-amino-acid chain: Alanine--tRNA ligase (875 aa).

Positions 564, 568, 666, and 670 each coordinate Zn(2+).

The protein belongs to the class-II aminoacyl-tRNA synthetase family. In terms of assembly, homotetramer. It depends on Zn(2+) as a cofactor.

The protein localises to the cytoplasm. The enzyme catalyses tRNA(Ala) + L-alanine + ATP = L-alanyl-tRNA(Ala) + AMP + diphosphate. Catalyzes the attachment of alanine to tRNA(Ala) in a two-step reaction: alanine is first activated by ATP to form Ala-AMP and then transferred to the acceptor end of tRNA(Ala). Also edits incorrectly charged Ser-tRNA(Ala) and Gly-tRNA(Ala) via its editing domain. The protein is Alanine--tRNA ligase of Yersinia pestis bv. Antiqua (strain Angola).